Here is a 97-residue protein sequence, read N- to C-terminus: UPF0390 protein CNBD1430 (97 aa).

Disordered stretches follow at residues 1–57 (MAQG…INNS) and 75–97 (RNVGELESGEGKDGKAKGKGKSR). Basic and acidic residues predominate over residues 29–46 (GKREVAPKDRQRVLERSQ). The span at 48–57 (KQLSSKINNS) shows a compositional bias: polar residues.

This sequence belongs to the UPF0390 family.

This chain is UPF0390 protein CNBD1430, found in Cryptococcus neoformans var. neoformans serotype D (strain B-3501A) (Filobasidiella neoformans).